The following is a 59-amino-acid chain: MKQKIKVTLVKSMIARPEKHRKVLRGMGLTKLNKTVELEDTPCIRGMIHKVSHLVSVKE.

Belongs to the universal ribosomal protein uL30 family. Part of the 50S ribosomal subunit.

This is Large ribosomal subunit protein uL30 from Desulfatibacillum aliphaticivorans.